Consider the following 275-residue polypeptide: Large ribosomal subunit protein uL2c (275 aa).

Positions 225–275 (MNPCDHPHGGGEGRSPIGRPRPVSPWGKPALGQRTRKGHKYSDQMILRRRK) are disordered.

It belongs to the universal ribosomal protein uL2 family. Part of the 50S ribosomal subunit.

The protein localises to the plastid. It is found in the chloroplast. In Oltmannsiellopsis viridis (Marine flagellate), this protein is Large ribosomal subunit protein uL2c (rpl2).